The chain runs to 391 residues: F-box protein At2g34280 (391 aa).

The F-box domain occupies 1–43; sequence MDLLPYDVVEHILERLDVKSLLNCKSVSKQWRSTIRCRAFQER.

The polypeptide is F-box protein At2g34280 (Arabidopsis thaliana (Mouse-ear cress)).